The primary structure comprises 193 residues: Holliday junction branch migration complex subunit RuvA (193 aa).

The tract at residues 1–64 is domain I; the sequence is MIGRIAGTLL…EDAHLLFGFA (64 aa). The interval 65–144 is domain II; it reads TATERNTFRE…DLGHAPGATP (80 aa). The segment at 145-151 is flexible linker; it reads LADSAVD. The domain III stretch occupies residues 151-193; it reads DILNALLALGYSEKEAAQAIKQVPAGTGVSDGIKLALKALSKG.

Belongs to the RuvA family. As to quaternary structure, homotetramer. Forms an RuvA(8)-RuvB(12)-Holliday junction (HJ) complex. HJ DNA is sandwiched between 2 RuvA tetramers; dsDNA enters through RuvA and exits via RuvB. An RuvB hexamer assembles on each DNA strand where it exits the tetramer. Each RuvB hexamer is contacted by two RuvA subunits (via domain III) on 2 adjacent RuvB subunits; this complex drives branch migration. In the full resolvosome a probable DNA-RuvA(4)-RuvB(12)-RuvC(2) complex forms which resolves the HJ.

The protein resides in the cytoplasm. Functionally, the RuvA-RuvB-RuvC complex processes Holliday junction (HJ) DNA during genetic recombination and DNA repair, while the RuvA-RuvB complex plays an important role in the rescue of blocked DNA replication forks via replication fork reversal (RFR). RuvA specifically binds to HJ cruciform DNA, conferring on it an open structure. The RuvB hexamer acts as an ATP-dependent pump, pulling dsDNA into and through the RuvAB complex. HJ branch migration allows RuvC to scan DNA until it finds its consensus sequence, where it cleaves and resolves the cruciform DNA. This is Holliday junction branch migration complex subunit RuvA from Cupriavidus metallidurans (strain ATCC 43123 / DSM 2839 / NBRC 102507 / CH34) (Ralstonia metallidurans).